A 116-amino-acid chain; its full sequence is Large ribosomal subunit protein bL17 (116 aa).

This sequence belongs to the bacterial ribosomal protein bL17 family. Part of the 50S ribosomal subunit. Contacts protein L32.

The sequence is that of Large ribosomal subunit protein bL17 from Thermosynechococcus vestitus (strain NIES-2133 / IAM M-273 / BP-1).